A 382-amino-acid chain; its full sequence is Adaptive-response sensory kinase SasA (382 aa).

The 223-residue stretch at 160–382 (MLAHDLRSPL…CFHFTLPVYR (223 aa)) folds into the Histidine kinase domain. His163 carries the phosphohistidine; by autocatalysis modification.

As to quaternary structure, homooligomerizes. Interacts with KaiC. Participates in the KaiABC clock complex, whose core is composed of a KaiC homohexamer, 6 KaiB and up to 6 KaiA dimers. SasA and KaiB(fs) compete to bind to KaiC.

The enzyme catalyses ATP + protein L-histidine = ADP + protein N-phospho-L-histidine.. Functionally, member of the two-component regulatory system SasA/RpaA involved in genome-wide circadian gene expression. One of several clock output pathways. Participates in the Kai clock protein complex, the main circadian regulator in cyanobacteria, via its interaction with KaiC. KaiC enhances the autophosphorylation activity of SasA, which then transfers its phosphate group to RpaA to activate it. In addition to its output function, recruits fold-shifted KaiB (KaiB(fs)) to KaiC to cooperatively form the KaiB(6):KaiC(6) complex (independent of SasA kinase activity). Required for robustness of the circadian rhythm of gene expression and is involved in clock output, also required for adaptation to light/dark cycles. The chain is Adaptive-response sensory kinase SasA from Crocosphaera subtropica (strain ATCC 51142 / BH68) (Cyanothece sp. (strain ATCC 51142)).